Reading from the N-terminus, the 641-residue chain is UPF0329 protein ECU11_0030 (641 aa).

A compositionally biased stretch (basic and acidic residues) spans 358-387 (RQRKREEETERSVKELVGDEEKAKSKEEKA). The disordered stretch occupies residues 358–444 (RQRKREEETE…KGGKKKSKGG (87 aa)). Residues 435 to 444 (KGGKKKSKGG) show a composition bias toward basic residues.

Belongs to the UPF0329 family.

This chain is UPF0329 protein ECU11_0030, found in Encephalitozoon cuniculi (strain GB-M1) (Microsporidian parasite).